The following is a 121-amino-acid chain: Succinate dehydrogenase assembly factor 3, mitochondrial (121 aa).

The N-terminal 35 residues, 1–35, are a transit peptide targeting the mitochondrion; that stretch reads MRPSLVRLVRPRRPERKTSPILPPLKLYKALLRAH.

Belongs to the complex I LYR family. SDHAF3 subfamily. In terms of assembly, interacts with the iron-sulfur protein subunit within the SDH catalytic dimer.

It is found in the mitochondrion matrix. Plays an essential role in the assembly of succinate dehydrogenase (SDH), an enzyme complex (also referred to as respiratory complex II) that is a component of both the tricarboxylic acid (TCA) cycle and the mitochondrial electron transport chain, and which couples the oxidation of succinate to fumarate with the reduction of ubiquinone (coenzyme Q) to ubiquinol. Promotes maturation of the iron-sulfur protein subunit of the SDH catalytic dimer, protecting it from the deleterious effects of oxidants. May act together with SDHAF1. This is Succinate dehydrogenase assembly factor 3, mitochondrial from Debaryomyces hansenii (strain ATCC 36239 / CBS 767 / BCRC 21394 / JCM 1990 / NBRC 0083 / IGC 2968) (Yeast).